Reading from the N-terminus, the 269-residue chain is MQITRESKYIIGLVLALGVSFATLLAHLFTKPSLEWVYNHHATPFFANKFMLGGYLLVEYLSFLLMIVPLLMLGDQVNDFTFSIIHTSIWYNVFVVFTVWAFTREKLYWTAFFSLCLFSSSFTMYGQSLRLRNGFVEMISMKLPSKLVFGKSLWFVVYAFSAALHCTGIGCRVFSNVFIWFFAAMYLVPILGFHDWALSLVSAYLFLSIGIGQMFIHLFALQHIFAFIIAGLMTLFAALLFLLPYRQRRAALTGESAPLLQDNNAGPAV.

8 consecutive transmembrane segments (helical) span residues 9–29, 50–70, 82–102, 107–127, 147–167, 173–193, 200–220, and 224–244; these read YIIGLVLALGVSFATLLAHLF, FMLGGYLLVEYLSFLLMIVPL, FSIIHTSIWYNVFVVFTVWAF, LYWTAFFSLCLFSSSFTMYGQ, LVFGKSLWFVVYAFSAALHCT, VFSNVFIWFFAAMYLVPILGF, LVSAYLFLSIGIGQMFIHLFA, and IFAFIIAGLMTLFAALLFLLP.

It is found in the membrane. This is an uncharacterized protein from Schizosaccharomyces pombe (strain 972 / ATCC 24843) (Fission yeast).